Reading from the N-terminus, the 298-residue chain is Probable D,D-dipeptide transport system permease protein DdpC (298 aa).

The Cytoplasmic segment spans residues 1–33 (MMLSEETSAVRPQKQTRFNGAKLVWMLKGSPLT). A helical transmembrane segment spans residues 34-54 (VTSAVIIVLMLLMMIFSPWLA). At 55–96 (THDPNAIDLTARLLPPSAAHWFGTDEVGRDLFSRVLVGSQQS) the chain is on the periplasmic side. The chain crosses the membrane as a helical span at residues 97–117 (ILAGLVVVAIAGMIGSLLGCL). The ABC transmembrane type-1 domain maps to 97–282 (ILAGLVVVAI…LTAVGFNLFG (186 aa)). The Cytoplasmic segment spans residues 118 to 124 (SGVLGGR). 2 consecutive transmembrane segments (helical) span residues 125–145 (ADAI…LVLT) and 146–166 (MALA…IAIV). The Cytoplasmic segment spans residues 167–217 (RIPFYVRLARGQALVVRQYTYVQAAKTFGASRWHLINWHILRNSLPPLIVQ). A helical transmembrane segment spans residues 218–238 (ASLDIGSAILMAATLGFIGLG). Over 239–260 (AQQPSAEWGAMVANGRNYVLDQ) the chain is Periplasmic. The helical transmembrane segment at 261–281 (WWYCAFPGAAILLTAVGFNLF) threads the bilayer. Over 282 to 298 (GDGIRDLLDPKAGGKQS) the chain is Cytoplasmic.

It belongs to the binding-protein-dependent transport system permease family. OppBC subfamily. As to quaternary structure, the complex is composed of two ATP-binding proteins (DdpD and DdpF), two transmembrane proteins (DdpB and DdpC) and a solute-binding protein (DdpA).

The protein localises to the cell inner membrane. In terms of biological role, part of the ABC transporter complex DdpABCDF, which is probably involved in D,D-dipeptide transport. Probably responsible for the translocation of the substrate across the membrane. The polypeptide is Probable D,D-dipeptide transport system permease protein DdpC (ddpC) (Escherichia coli (strain K12)).